The chain runs to 165 residues: Large ribosomal subunit protein uL15 (165 aa).

The span at Met1 to Gly30 shows a compositional bias: basic residues. Disordered regions lie at residues Met1 to His39 and Ala137 to Ala165. Acidic residues predominate over residues Ala150–Ala165.

This sequence belongs to the universal ribosomal protein uL15 family. In terms of assembly, part of the 50S ribosomal subunit.

Functionally, binds to the 23S rRNA. The chain is Large ribosomal subunit protein uL15 from Halorubrum lacusprofundi (strain ATCC 49239 / DSM 5036 / JCM 8891 / ACAM 34).